The chain runs to 116 residues: MEFIDGEELKSAVDKLDKDRLLKVVEDILKITLKLDILGIEHKEIQGGRHFLITNKKTYIIDFDKAKEKKTTKNFTGAIALLFGEGRIAKTIRENLNIGIDEIKFIREFAKKYKKL.

This is an uncharacterized protein from Methanocaldococcus jannaschii (strain ATCC 43067 / DSM 2661 / JAL-1 / JCM 10045 / NBRC 100440) (Methanococcus jannaschii).